The primary structure comprises 275 residues: Calcium uniporter protein, mitochondrial (275 aa).

The transit peptide at 1 to 28 (MNSFVIRNGFGLVRTFNTRLFTTSTQNL) directs the protein to the mitochondrion. Residues 29 to 165 (EGELKTILGQ…DRKAHRRATA (137 aa)) are Mitochondrial matrix-facing. The stretch at 125–157 (VGLNKLIESKKSEINSLRQKIQPLEEKKQVIDR) forms a coiled coil. A helical membrane pass occupies residues 166 to 186 (IIWTGLGYCFAQAAILARLTW). Topologically, residues 187 to 192 (WDLSWD) are mitochondrial intermembrane. Positions 191–199 (WDIIEPVSY) match the Selectivity filter motif. A helical membrane pass occupies residues 193–213 (IIEPVSYFLTFGSVLIGYTYF). Glu195 contacts Ca(2+). Topologically, residues 214–275 (TMTKTEFTYE…ELATKYDHTH (62 aa)) are mitochondrial matrix. A coiled-coil region spans residues 244-270 (PKEDYENLVQAIDKKEKELKELELATK).

The protein belongs to the MCU (TC 1.A.77) family. Homooligomer.

Its subcellular location is the mitochondrion inner membrane. The enzyme catalyses Ca(2+)(in) = Ca(2+)(out). Inhibited by ruthenium red or its derivative Ru360. Functionally, mitochondrial inner membrane calcium uniporter that mediates calcium uptake into mitochondria. Constitutes a pore-forming and calcium-conducting subunit. Mitochondrial calcium homeostasis plays key roles in cellular physiology and regulates cell bioenergetics, cytoplasmic calcium signals and activation of cell death pathways. Sufficient to operate as a pore-forming channel without the need of calcium-sensor or auxiliary subunit. This Dictyostelium discoideum (Social amoeba) protein is Calcium uniporter protein, mitochondrial.